The following is a 321-amino-acid chain: Glucokinase (321 aa).

8–13 (GDVGGT) contributes to the ATP binding site.

The protein belongs to the bacterial glucokinase family.

Its subcellular location is the cytoplasm. The catalysed reaction is D-glucose + ATP = D-glucose 6-phosphate + ADP + H(+). The protein is Glucokinase of Escherichia coli (strain SMS-3-5 / SECEC).